We begin with the raw amino-acid sequence, 211 residues long: MDKKRNISMAVIKRLPKYHRYLEELLRNEVDRISSKELSKKIGFTASQIRQDFNCFGDFGQQGYGYNVKELHAQISNILGLTKEYRCIILGGGNIGQAIANYNKFEKLGFRLEAIFDINPKLVGLKIRDIEIKDIDTLEDYLKENNVDVGIICVPSRSAQKVCDILTRNNVKGIWNFAPVDLKVPEGVFTENVHLSENLLTLSYLMNEQEE.

A DNA-binding region (H-T-H motif) is located at residues Lys17–Phe56. An NAD(+)-binding site is contributed by Gly91–Gly96.

Belongs to the transcriptional regulatory Rex family. As to quaternary structure, homodimer.

It localises to the cytoplasm. Its function is as follows. Modulates transcription in response to changes in cellular NADH/NAD(+) redox state. The chain is Redox-sensing transcriptional repressor Rex from Clostridium tetani (strain Massachusetts / E88).